The following is a 520-amino-acid chain: Beta-2-syntrophin (520 aa).

The tract at residues 45–95 is disordered; it reads EPPAAAFNGLPNGGGGESLPGSPNRGLGPPSPPAPPRGPAGEASASPPVRR. Low complexity predominate over residues 63 to 72; that stretch reads LPGSPNRGLG. Pro residues predominate over residues 73–82; that stretch reads PPSPPAPPRG. Ser-75, Ser-90, Ser-109, Ser-191, Ser-202, Ser-213, Ser-373, and Ser-375 each carry phosphoserine. Low complexity predominate over residues 83–93; that stretch reads PAGEASASPPV. One can recognise a PDZ domain in the interval 95 to 178; that stretch reads RVRVVKQEAG…EVLLEVKFIR (84 aa). 2 PH domains span residues 143–280 and 305–417; these read ILSV…TNIM and EVKH…QGCH. Residues 195 to 220 form a disordered region; it reads WEGASPQSPSFSGSEDSGSPKHQNTT. Low complexity predominate over residues 197-211; sequence GASPQSPSFSGSEDS. Residues 464 to 520 form the SU domain; sequence PFERLKMSADDGIRNLYLDFGGPEGELTMDLHSCPKPIVFVLHTFLSAKVTRMGLLV. Residues 498–520 are calmodulin-binding; sequence PKPIVFVLHTFLSAKVTRMGLLV.

This sequence belongs to the syntrophin family. Monomer and homodimer. Interacts with the dystrophin protein DMD and related protein DTNA; and with the other members of the syntrophin family: SNTA1 and SNTB1. Interacts with the neuroregulin receptor ERBB4. Interacts with PTPRN when phosphorylated, protecting PTPRN from protein cleavage by CAPN1. Dephosphorylation upon insulin stimulation disrupts the interaction with PTPRN and results in the cleavage of PTPRN. Interacts with the sodium channel proteins SCN4A and SCN5A. Interacts with SAST, MAST205, microtubules and microtubule-associated proteins. Interacts with the dystrophin related protein UTRN. Interacts with DTNB. Post-translationally, phosphorylated. Partially dephosphorylated upon insulin stimulation. Ubiquitous. Expressed at high levels in the testis.

The protein localises to the membrane. Its subcellular location is the cytoplasmic vesicle. The protein resides in the secretory vesicle membrane. It is found in the cell junction. It localises to the cytoplasm. The protein localises to the cytoskeleton. Adapter protein that binds to and probably organizes the subcellular localization of a variety of membrane proteins. May link various receptors to the actin cytoskeleton and the dystrophin glycoprotein complex. May play a role in the regulation of secretory granules via its interaction with PTPRN. This is Beta-2-syntrophin (Sntb2) from Mus musculus (Mouse).